Here is a 126-residue protein sequence, read N- to C-terminus: 13 kDa ribonucleoprotein-associated protein (126 aa).

It belongs to the eukaryotic ribosomal protein eL8 family. Component of the U3 snoRNP particle. Binds to the C'/D and B/C motifs in U3 snoRNA. Component of the 25S U4/U6.U5 tri-snRNP particle, a subcomplex of the spliceosome. Binds to the 5' stem-loop of U4 snRNA.

The protein localises to the nucleus. Its subcellular location is the nucleolus. Functionally, common component of the spliceosome and rRNA processing machinery. In association with the spliceosomal U4/U6.U5 tri-snRNP particle, required for splicing of pre-mRNA. In association with box C/D snoRNPs, required for processing of pre-ribosomal RNA (rRNA) and site-specific 2'-O-methylation of substrate RNAs. Essential for the accumulation and stability of U4 snRNA, U6 snRNA, and box C/D snoRNAs. In Mycosarcoma maydis (Corn smut fungus), this protein is 13 kDa ribonucleoprotein-associated protein (SNU13).